Consider the following 346-residue polypeptide: tRNA N6-adenosine threonylcarbamoyltransferase (346 aa).

Residues H111 and H115 each contribute to the Fe cation site. Residues 134–138 (LVSGG), D167, G180, and N279 each bind substrate. D307 lines the Fe cation pocket.

Belongs to the KAE1 / TsaD family. Fe(2+) serves as cofactor.

It localises to the cytoplasm. It carries out the reaction L-threonylcarbamoyladenylate + adenosine(37) in tRNA = N(6)-L-threonylcarbamoyladenosine(37) in tRNA + AMP + H(+). Required for the formation of a threonylcarbamoyl group on adenosine at position 37 (t(6)A37) in tRNAs that read codons beginning with adenine. Is involved in the transfer of the threonylcarbamoyl moiety of threonylcarbamoyl-AMP (TC-AMP) to the N6 group of A37, together with TsaE and TsaB. TsaD likely plays a direct catalytic role in this reaction. This chain is tRNA N6-adenosine threonylcarbamoyltransferase, found in Burkholderia cenocepacia (strain ATCC BAA-245 / DSM 16553 / LMG 16656 / NCTC 13227 / J2315 / CF5610) (Burkholderia cepacia (strain J2315)).